Reading from the N-terminus, the 401-residue chain is Lsg locus putative protein 1 (401 aa).

A run of 11 helical transmembrane segments spans residues 8–28, 36–56, 87–107, 132–152, 162–182, 199–219, 237–257, 282–302, 320–340, 352–372, and 374–394; these read VIYL…LPYL, GYGS…VVSL, IIGS…LFYA, SYAF…VALL, KRIL…YFLY, ALFY…SFFL, LGLY…IQAL, WALF…IIPE, FILF…VNYL, CSVL…FTEI, and YIPY…YFMT.

Belongs to the polysaccharide synthase family. HI_0867/HI_1700 subfamily.

The protein resides in the cell membrane. The chain is Lsg locus putative protein 1 from Haemophilus influenzae (strain ATCC 51907 / DSM 11121 / KW20 / Rd).